The primary structure comprises 398 residues: Ornithine aminotransferase (398 aa).

Position 255 is an N6-(pyridoxal phosphate)lysine (lysine 255).

The protein belongs to the class-III pyridoxal-phosphate-dependent aminotransferase family. OAT subfamily. Pyridoxal 5'-phosphate serves as cofactor.

It is found in the cytoplasm. It catalyses the reaction a 2-oxocarboxylate + L-ornithine = L-glutamate 5-semialdehyde + an L-alpha-amino acid. Its pathway is amino-acid biosynthesis; L-proline biosynthesis; L-glutamate 5-semialdehyde from L-ornithine: step 1/1. Its function is as follows. Catalyzes the interconversion of ornithine to glutamate semialdehyde. The chain is Ornithine aminotransferase from Geobacillus sp. (strain WCH70).